A 275-amino-acid chain; its full sequence is Rhamnulose-1-phosphate aldolase (275 aa).

Residue Glu-117 is part of the active site. 3 residues coordinate Zn(2+): His-141, His-143, and His-212.

This sequence belongs to the aldolase class II family. RhaD subfamily. In terms of assembly, homotetramer. Requires Zn(2+) as cofactor.

The protein localises to the cytoplasm. It carries out the reaction L-rhamnulose 1-phosphate = (S)-lactaldehyde + dihydroxyacetone phosphate. Its pathway is carbohydrate degradation; L-rhamnose degradation; glycerone phosphate from L-rhamnose: step 3/3. Its function is as follows. Catalyzes the reversible cleavage of L-rhamnulose-1-phosphate to dihydroxyacetone phosphate (DHAP) and L-lactaldehyde. The sequence is that of Rhamnulose-1-phosphate aldolase from Salmonella dublin (strain CT_02021853).